The chain runs to 89 residues: Large ribosomal subunit protein bL27 (89 aa).

The disordered stretch occupies residues 1–26 (MAHKKAGGSSRNGRDSAGQRRGVKRF).

It belongs to the bacterial ribosomal protein bL27 family.

In Nitratidesulfovibrio vulgaris (strain DSM 19637 / Miyazaki F) (Desulfovibrio vulgaris), this protein is Large ribosomal subunit protein bL27.